Reading from the N-terminus, the 167-residue chain is Peptidyl-prolyl cis-trans isomerase-like 3 (167 aa).

A PPIase cyclophilin-type domain is found at 1 to 160; it reads MSVTLHTSHG…EPVRIENVTI (160 aa).

Belongs to the cyclophilin-type PPIase family. PPIL3 subfamily.

The catalysed reaction is [protein]-peptidylproline (omega=180) = [protein]-peptidylproline (omega=0). Its function is as follows. PPIases accelerate the folding of proteins. It catalyzes the cis-trans isomerization of proline imidic peptide bonds in oligopeptides. This is Peptidyl-prolyl cis-trans isomerase-like 3 (CYP10) from Gibberella zeae (strain ATCC MYA-4620 / CBS 123657 / FGSC 9075 / NRRL 31084 / PH-1) (Wheat head blight fungus).